Reading from the N-terminus, the 259-residue chain is GTP cyclohydrolase FolE2 (259 aa).

This sequence belongs to the GTP cyclohydrolase IV family.

It catalyses the reaction GTP + H2O = 7,8-dihydroneopterin 3'-triphosphate + formate + H(+). It participates in cofactor biosynthesis; 7,8-dihydroneopterin triphosphate biosynthesis; 7,8-dihydroneopterin triphosphate from GTP: step 1/1. Converts GTP to 7,8-dihydroneopterin triphosphate. This Thermosipho melanesiensis (strain DSM 12029 / CIP 104789 / BI429) protein is GTP cyclohydrolase FolE2.